Reading from the N-terminus, the 276-residue chain is Diaminopimelate epimerase (276 aa).

3 residues coordinate substrate: Asn13, Gln46, and Asn66. Residue Cys75 is the Proton donor of the active site. Residues 76 to 77 (GN), Asn159, Asn192, and 210 to 211 (ER) contribute to the substrate site. Cys219 (proton acceptor) is an active-site residue. 220 to 221 (GT) contacts substrate.

This sequence belongs to the diaminopimelate epimerase family. Homodimer.

The protein resides in the cytoplasm. It carries out the reaction (2S,6S)-2,6-diaminopimelate = meso-2,6-diaminopimelate. It participates in amino-acid biosynthesis; L-lysine biosynthesis via DAP pathway; DL-2,6-diaminopimelate from LL-2,6-diaminopimelate: step 1/1. Catalyzes the stereoinversion of LL-2,6-diaminopimelate (L,L-DAP) to meso-diaminopimelate (meso-DAP), a precursor of L-lysine and an essential component of the bacterial peptidoglycan. The chain is Diaminopimelate epimerase from Ectopseudomonas mendocina (strain ymp) (Pseudomonas mendocina).